Consider the following 68-residue polypeptide: Conotoxin TsMMSK-021 (68 aa).

A signal peptide spans 1 to 20; it reads MMSKLGVLLTICLLLFPLTA. Positions 21–50 are excised as a propeptide; sequence VPLDGDQHADRPADRMQDISSEQHPLFDPV. 3 cysteine pairs are disulfide-bonded: Cys-53-Cys-66, Cys-54-Cys-62, and Cys-58-Cys-65. Pro-64 carries the post-translational modification 4-hydroxyproline.

The protein belongs to the conotoxin M superfamily. In terms of tissue distribution, expressed by the venom duct.

It localises to the secreted. The chain is Conotoxin TsMMSK-021 from Conus tessulatus (Tessellate cone).